The primary structure comprises 275 residues: NH(3)-dependent NAD(+) synthetase (275 aa).

50-57 (GISGGVDS) contributes to the ATP binding site. Residue D56 participates in Mg(2+) binding. Deamido-NAD(+) is bound at residue R147. Residue T167 coordinates ATP. Residue E172 participates in Mg(2+) binding. 2 residues coordinate deamido-NAD(+): K180 and D187. Residues K196 and T218 each contribute to the ATP site. 267 to 268 (HK) contacts deamido-NAD(+).

The protein belongs to the NAD synthetase family. Homodimer.

The enzyme catalyses deamido-NAD(+) + NH4(+) + ATP = AMP + diphosphate + NAD(+) + H(+). It participates in cofactor biosynthesis; NAD(+) biosynthesis; NAD(+) from deamido-NAD(+) (ammonia route): step 1/1. In terms of biological role, catalyzes the ATP-dependent amidation of deamido-NAD to form NAD. Uses ammonia as a nitrogen source. The polypeptide is NH(3)-dependent NAD(+) synthetase (Stutzerimonas stutzeri (strain A1501) (Pseudomonas stutzeri)).